Reading from the N-terminus, the 226-residue chain is HTH-type transcriptional regulator Rv0324 (226 aa).

In terms of domain architecture, HTH arsR-type spans 7 to 101 (RKAALLDQVA…LVQVVADEHL (95 aa)). The H-T-H motif DNA-binding region spans 41 to 64 (VEAIATATGMNLTTASANLQALKS). Residues 129 to 218 (EAGEVTLVDV…WRLAGLPVDE (90 aa)) enclose the Rhodanese domain. Cys-177 serves as the catalytic Cysteine persulfide intermediate.

Its function is as follows. Part of a regulatory network that coordinates tolerance to the antitubercular drug bedaquiline. The chain is HTH-type transcriptional regulator Rv0324 from Mycobacterium tuberculosis (strain ATCC 25618 / H37Rv).